The primary structure comprises 256 residues: Phosphonates import ATP-binding protein PhnC (256 aa).

The 249-residue stretch at 5-253 folds into the ABC transporter domain; the sequence is LRITGLVKEY…MLKTIYGGES (249 aa). ATP is bound at residue 38-45; the sequence is GPSGTGKS.

Belongs to the ABC transporter superfamily. Phosphonates importer (TC 3.A.1.9.1) family. In terms of assembly, the complex is composed of two ATP-binding proteins (PhnC), two transmembrane proteins (PhnE) and a solute-binding protein (PhnD).

The protein resides in the cell inner membrane. It carries out the reaction phosphonate(out) + ATP + H2O = phosphonate(in) + ADP + phosphate + H(+). In terms of biological role, part of the ABC transporter complex PhnCDE involved in phosphonates import. Responsible for energy coupling to the transport system. The chain is Phosphonates import ATP-binding protein PhnC from Bordetella parapertussis (strain 12822 / ATCC BAA-587 / NCTC 13253).